The primary structure comprises 618 residues: Proline--tRNA ligase (618 aa).

Belongs to the class-II aminoacyl-tRNA synthetase family. ProS type 1 subfamily. As to quaternary structure, homodimer.

It localises to the cytoplasm. The enzyme catalyses tRNA(Pro) + L-proline + ATP = L-prolyl-tRNA(Pro) + AMP + diphosphate. Its function is as follows. Catalyzes the attachment of proline to tRNA(Pro) in a two-step reaction: proline is first activated by ATP to form Pro-AMP and then transferred to the acceptor end of tRNA(Pro). As ProRS can inadvertently accommodate and process non-cognate amino acids such as alanine and cysteine, to avoid such errors it has two additional distinct editing activities against alanine. One activity is designated as 'pretransfer' editing and involves the tRNA(Pro)-independent hydrolysis of activated Ala-AMP. The other activity is designated 'posttransfer' editing and involves deacylation of mischarged Ala-tRNA(Pro). The misacylated Cys-tRNA(Pro) is not edited by ProRS. This is Proline--tRNA ligase from Streptococcus uberis (strain ATCC BAA-854 / 0140J).